We begin with the raw amino-acid sequence, 449 residues long: Trigger factor (449 aa).

The 82-residue stretch at 162-243 folds into the PPIase FKBP-type domain; it reads GEFVTINITA…ITATKQRELP (82 aa). Positions 428–437 are enriched in basic and acidic residues; that stretch reads GNEIDPKEYF. Positions 428–449 are disordered; that stretch reads GNEIDPKEYFGEEEVAETESEA. Residues 438 to 449 show a composition bias toward acidic residues; it reads GEEEVAETESEA.

It belongs to the FKBP-type PPIase family. Tig subfamily.

The protein resides in the cytoplasm. It catalyses the reaction [protein]-peptidylproline (omega=180) = [protein]-peptidylproline (omega=0). Involved in protein export. Acts as a chaperone by maintaining the newly synthesized protein in an open conformation. Functions as a peptidyl-prolyl cis-trans isomerase. The polypeptide is Trigger factor (Corynebacterium glutamicum (strain R)).